Here is a 259-residue protein sequence, read N- to C-terminus: Exosome complex component Rrp42 (259 aa).

The protein belongs to the RNase PH family. Rrp42 subfamily. As to quaternary structure, component of the archaeal exosome complex. Forms a hexameric ring-like arrangement composed of 3 Rrp41-Rrp42 heterodimers. The hexameric ring associates with a trimer of Rrp4 and/or Csl4 subunits.

The protein localises to the cytoplasm. Functionally, non-catalytic component of the exosome, which is a complex involved in RNA degradation. Contributes to the structuring of the Rrp41 active site. In Archaeoglobus fulgidus (strain ATCC 49558 / DSM 4304 / JCM 9628 / NBRC 100126 / VC-16), this protein is Exosome complex component Rrp42.